We begin with the raw amino-acid sequence, 712 residues long: Polyribonucleotide nucleotidyltransferase (712 aa).

Mg(2+)-binding residues include D493 and D499. The KH domain maps to P560–I619. The S1 motif domain occupies G629–L697.

The protein belongs to the polyribonucleotide nucleotidyltransferase family. The cofactor is Mg(2+).

It localises to the cytoplasm. It catalyses the reaction RNA(n+1) + phosphate = RNA(n) + a ribonucleoside 5'-diphosphate. Functionally, involved in mRNA degradation. Catalyzes the phosphorolysis of single-stranded polyribonucleotides processively in the 3'- to 5'-direction. The chain is Polyribonucleotide nucleotidyltransferase from Synechococcus sp. (strain JA-3-3Ab) (Cyanobacteria bacterium Yellowstone A-Prime).